The sequence spans 914 residues: MEFVMKTRMFEEEGWIRKTCKVCGKPFWTLDPDRETCGDPPCDEYQFIGKPGIPKKYTLDEMREKFLSFFEKHEVYPHGRVKRYPVLPRWRDDVLLVGASIMDFQPWVISGEADPPANPLTISQPSIRFTDIDNVGITGRHFTIFEMMAHHAFNYPGKHIYWIDETVELAFEFFTKELKMKPEDITFKENPWAGGGNAGPAFEVLYKGLEVATLVFMQYKKAPANADPSQVVIIKGEKYVPMETKVVDTGYGLERLVWMSQGTPTAYDAVLGYVIEPLKRMAGVEKIDERILMENSRLAGMFDIEDMGDLRYLREQVAKRVGISVEELERLIRPYELIYAIADHTKALTFMLADGVVPSNVKAGYLARLLIRKSIRHLRELGLEVPLAEIVAMHIKELSPTFPEFKEMEDIILEMIELEEKKYAETLRRGSDLVKREIAKLKKKGANEIPLEKLITFYESHGLTPEIVKEIAEKEGVKVHIPDNFYSLVAKEAEKQVEEKEEEVVDFELVKDLPDTRTLYYEDPFMKEFDAKVLKVIEDWVVLDQTAFYPEGGGQPYDTGILVVDGEEVKVTNVQKVGKVILHKVERPELFKEGTIVHGRIDWERRIQHMRHHTGTHVLMGALVRVLGKHVWQAGSQLSTDWARLDITHYKRISDEEIKEIERLANRVVMENRRVRWEWLPRTEADEKYGFRLYQGGVVPGRIIRILNIEDWDVQACGGTHLPSTGLIGPIKILRTERIQDGVERIIFACGEAAVREWQKEREIIKRTSQILRVPPEKLPETAERFFNEWKEARKEVEKLRKELAKLLVYELESKVEKVGEIEFIGEIVEGSMDDLREAANKLRKENRVVVLVNKEGHFVVAVGDKLPYTAGEFAKLITSVAGGGGGGRKELAQGKIRDIEKAKEAIEKVKGSL.

4 residues coordinate Zn(2+): histidine 613, histidine 617, cysteine 717, and histidine 721.

It belongs to the class-II aminoacyl-tRNA synthetase family. The cofactor is Zn(2+).

It localises to the cytoplasm. It catalyses the reaction tRNA(Ala) + L-alanine + ATP = L-alanyl-tRNA(Ala) + AMP + diphosphate. Its function is as follows. Catalyzes the attachment of alanine to tRNA(Ala) in a two-step reaction: alanine is first activated by ATP to form Ala-AMP and then transferred to the acceptor end of tRNA(Ala). Also edits incorrectly charged Ser-tRNA(Ala) and Gly-tRNA(Ala) via its editing domain. The chain is Alanine--tRNA ligase from Pyrococcus furiosus (strain ATCC 43587 / DSM 3638 / JCM 8422 / Vc1).